A 73-amino-acid chain; its full sequence is Protein RALF-like 10 (73 aa).

A signal peptide spans 1 to 17; it reads MKALVICLLVIFAAVIA. Intrachain disulfides connect Cys-35–Cys-44 and Cys-64–Cys-70.

The protein belongs to the plant rapid alkalinization factor (RALF) family. Expressed in flowers.

It is found in the secreted. Cell signaling peptide that may regulate plant stress, growth, and development. Mediates a rapid alkalinization of extracellular space by mediating a transient increase in the cytoplasmic Ca(2+) concentration leading to a calcium-dependent signaling events through a cell surface receptor and a concomitant activation of some intracellular mitogen-activated protein kinases. The polypeptide is Protein RALF-like 10 (RALFL10) (Arabidopsis thaliana (Mouse-ear cress)).